The sequence spans 269 residues: 4-hydroxy-tetrahydrodipicolinate reductase (269 aa).

NAD(+)-binding positions include 8-13 (GAAGRM) and glutamate 34. Residue arginine 35 coordinates NADP(+). NAD(+) contacts are provided by residues 98–100 (GTT) and 122–125 (APNY). The active-site Proton donor/acceptor is histidine 155. Histidine 156 contacts (S)-2,3,4,5-tetrahydrodipicolinate. Lysine 159 (proton donor) is an active-site residue. A (S)-2,3,4,5-tetrahydrodipicolinate-binding site is contributed by 165-166 (GT).

Belongs to the DapB family.

Its subcellular location is the cytoplasm. The catalysed reaction is (S)-2,3,4,5-tetrahydrodipicolinate + NAD(+) + H2O = (2S,4S)-4-hydroxy-2,3,4,5-tetrahydrodipicolinate + NADH + H(+). It carries out the reaction (S)-2,3,4,5-tetrahydrodipicolinate + NADP(+) + H2O = (2S,4S)-4-hydroxy-2,3,4,5-tetrahydrodipicolinate + NADPH + H(+). It functions in the pathway amino-acid biosynthesis; L-lysine biosynthesis via DAP pathway; (S)-tetrahydrodipicolinate from L-aspartate: step 4/4. Catalyzes the conversion of 4-hydroxy-tetrahydrodipicolinate (HTPA) to tetrahydrodipicolinate. This is 4-hydroxy-tetrahydrodipicolinate reductase from Vibrio cholerae serotype O1 (strain ATCC 39315 / El Tor Inaba N16961).